A 173-amino-acid polypeptide reads, in one-letter code: MASHEEILADKAIFAYLHRMIGDEGIELIRRFPTDKEYSDEELAEVTKINLNSVRNTLYTLYEHRLAKYRRIKNNETGWLTYLWELELDNMYDSVSKDLEIILEKLRKRYKYESENAFYNCPNCGNTITFSDAMDSQFVCQECENKMVHFDNDLLVNALQKRIARIEENLGHV.

An HTH TFE/IIEalpha-type domain is found at 9-92 (ADKAIFAYLH…LWELELDNMY (84 aa)).

It belongs to the TFE family. In terms of assembly, monomer. Interaction with RNA polymerase subunits RpoF and RpoE is necessary for Tfe stimulatory transcription activity. Able to interact with Tbp and RNA polymerase in the absence of DNA promoter. Interacts both with the preinitiation and elongation complexes.

In terms of biological role, transcription factor that plays a role in the activation of archaeal genes transcribed by RNA polymerase. Facilitates transcription initiation by enhancing TATA-box recognition by TATA-box-binding protein (Tbp), and transcription factor B (Tfb) and RNA polymerase recruitment. Not absolutely required for transcription in vitro, but particularly important in cases where Tbp or Tfb function is not optimal. It dynamically alters the nucleic acid-binding properties of RNA polymerases by stabilizing the initiation complex and destabilizing elongation complexes. Seems to translocate with the RNA polymerase following initiation and acts by binding to the non template strand of the transcription bubble in elongation complexes. The polypeptide is Transcription factor E (Methanospirillum hungatei JF-1 (strain ATCC 27890 / DSM 864 / NBRC 100397 / JF-1)).